The primary structure comprises 742 residues: 5-methyltetrahydropteroyltriglutamate--homocysteine methyltransferase (742 aa).

Residues 18 to 21 and Lys112 contribute to the 5-methyltetrahydropteroyltri-L-glutamate site; that span reads REWK. L-homocysteine contacts are provided by residues 420–422 and Glu473; that span reads IGS. L-methionine-binding positions include 420–422 and Glu473; that span reads IGS. Trp550 contacts 5-methyltetrahydropteroyltri-L-glutamate. L-homocysteine is bound at residue Asp588. Asp588 lines the L-methionine pocket. Glu594 lines the 5-methyltetrahydropteroyltri-L-glutamate pocket. His630, Cys632, and Glu654 together coordinate Zn(2+). His683 functions as the Proton donor in the catalytic mechanism. Cys715 serves as a coordination point for Zn(2+).

This sequence belongs to the vitamin-B12 independent methionine synthase family. The cofactor is Zn(2+).

The enzyme catalyses 5-methyltetrahydropteroyltri-L-glutamate + L-homocysteine = tetrahydropteroyltri-L-glutamate + L-methionine. Its pathway is amino-acid biosynthesis; L-methionine biosynthesis via de novo pathway; L-methionine from L-homocysteine (MetE route): step 1/1. Catalyzes the transfer of a methyl group from 5-methyltetrahydrofolate to homocysteine resulting in methionine formation. This is 5-methyltetrahydropteroyltriglutamate--homocysteine methyltransferase from Staphylococcus aureus (strain bovine RF122 / ET3-1).